A 108-amino-acid chain; its full sequence is Protein RnfH (108 aa).

Residues 86–108 form a disordered region; sequence ARRRRAEKAKEEGRANKVTGGRA.

It belongs to the UPF0125 (RnfH) family.

The sequence is that of Protein RnfH from Pseudoalteromonas atlantica (strain T6c / ATCC BAA-1087).